The primary structure comprises 358 residues: 3-dehydroquinate synthase (358 aa).

Residues 104–108 (GVIGD), 128–129 (TT), Lys-140, Lys-149, and 167–170 (FLNT) each bind NAD(+). Zn(2+)-binding residues include Glu-182, His-246, and His-260.

The protein belongs to the sugar phosphate cyclases superfamily. Dehydroquinate synthase family. Co(2+) is required as a cofactor. It depends on Zn(2+) as a cofactor. The cofactor is NAD(+).

It localises to the cytoplasm. It catalyses the reaction 7-phospho-2-dehydro-3-deoxy-D-arabino-heptonate = 3-dehydroquinate + phosphate. It functions in the pathway metabolic intermediate biosynthesis; chorismate biosynthesis; chorismate from D-erythrose 4-phosphate and phosphoenolpyruvate: step 2/7. Catalyzes the conversion of 3-deoxy-D-arabino-heptulosonate 7-phosphate (DAHP) to dehydroquinate (DHQ). The polypeptide is 3-dehydroquinate synthase (Staphylococcus carnosus (strain TM300)).